Reading from the N-terminus, the 340-residue chain is Adenosine deaminase (340 aa).

Zn(2+) contacts are provided by His-15 and His-17. Substrate is bound by residues His-17, Asp-19, and Gly-172. His-199 serves as a coordination point for Zn(2+). Glu-202 functions as the Proton donor in the catalytic mechanism. Position 279 (Asp-279) interacts with Zn(2+).

Belongs to the metallo-dependent hydrolases superfamily. Adenosine and AMP deaminases family. Adenosine deaminase subfamily. Requires Zn(2+) as cofactor.

It catalyses the reaction adenosine + H2O + H(+) = inosine + NH4(+). It carries out the reaction 2'-deoxyadenosine + H2O + H(+) = 2'-deoxyinosine + NH4(+). Catalyzes the hydrolytic deamination of adenosine and 2-deoxyadenosine. The chain is Adenosine deaminase from Streptococcus agalactiae serotype III (strain NEM316).